The sequence spans 544 residues: Ribosomal oxygenase 1 (544 aa).

Residues 1–78 (MERKHMSALS…HEGERDCREM (78 aa)) form a disordered region. Positions 10-19 (SIYQSLSGGK) are enriched in polar residues. The span at 42 to 53 (PSKKATKKKGTK) shows a compositional bias: basic residues. Residues 63 to 78 (SSEKEKHEGERDCREM) show a composition bias toward basic and acidic residues. The JmjC domain occupies 197–342 (CSIRMLNPQA…DLMLKLMPAA (146 aa)). 3 residues coordinate Fe cation: H243, D245, and H308.

The protein belongs to the ROX family. NO66 subfamily. Fe(2+) is required as a cofactor.

It is found in the nucleus. Its subcellular location is the nucleolus. It localises to the nucleoplasm. The catalysed reaction is N(6),N(6)-dimethyl-L-lysyl(36)-[histone H3] + 2 2-oxoglutarate + 2 O2 = L-lysyl(36)-[histone H3] + 2 formaldehyde + 2 succinate + 2 CO2. It catalyses the reaction N(6)-methyl-L-lysyl-[protein] + 2-oxoglutarate + O2 = L-lysyl-[protein] + formaldehyde + succinate + CO2. The enzyme catalyses L-histidyl-[protein] + 2-oxoglutarate + O2 = (3S)-3-hydroxy-L-histidyl-[protein] + succinate + CO2. In terms of biological role, oxygenase that can act as both a histone lysine demethylase and a ribosomal histidine hydroxylase. Specifically demethylates 'Lys-4' (H3K4me) and 'Lys-36' (H3K36me) of histone H3, thereby playing a central role in histone code. Preferentially demethylates trimethylated H3 'Lys-4' (H3K4me3) and monomethylated H3 'Lys-4' (H3K4me1) residues, while it has weaker activity for dimethylated H3 'Lys-36' (H3K36me2). Also catalyzes demethylation of non-histone proteins. Also catalyzes the hydroxylation of 60S ribosomal protein L8 on 'His-216', thereby playing a role in ribosome biogenesis. This is Ribosomal oxygenase 1 (riox1) from Danio rerio (Zebrafish).